The chain runs to 493 residues: 3-octaprenyl-4-hydroxybenzoate carboxy-lyase (493 aa).

Asparagine 172 is a binding site for Mn(2+). Prenylated FMN contacts are provided by residues 175 to 177 (IYR), 189 to 191 (RWL), and 194 to 195 (RG). Glutamate 238 is a binding site for Mn(2+). Aspartate 287 serves as the catalytic Proton donor.

This sequence belongs to the UbiD family. In terms of assembly, homohexamer. Prenylated FMN is required as a cofactor. It depends on Mn(2+) as a cofactor.

The protein resides in the cell membrane. The catalysed reaction is a 4-hydroxy-3-(all-trans-polyprenyl)benzoate + H(+) = a 2-(all-trans-polyprenyl)phenol + CO2. The protein operates within cofactor biosynthesis; ubiquinone biosynthesis. Catalyzes the decarboxylation of 3-octaprenyl-4-hydroxy benzoate to 2-octaprenylphenol, an intermediate step in ubiquinone biosynthesis. The polypeptide is 3-octaprenyl-4-hydroxybenzoate carboxy-lyase (Shewanella piezotolerans (strain WP3 / JCM 13877)).